The following is a 406-amino-acid chain: MVAENQPGHIDQIKQTNAGAVYRLIDQLGPVSRIDLSRLAQLAPASITKIVREMLEAHLVQELEIKEAGNRGRPAVGLVVETEAWHYLSLRISRGEIFLALRDLSSKLVVEESQELALKDDLPLLDRIISHIDQFFIRHQKKLERLTSIAITLPGIIDTENGIVHRMPFYEDVKEMPLGEALEQHTGVPVYIQHDISAWTMAEALFGASRGARDVIQVVIDHNVGAGVITDGHLLHAGSSSLVEIGHTQVDPYGKRCYCGNHGCLETIASVDSILELAQLRLNQSMSSMLHGQPLTVDSLCQAALRGDLLAKDIITGVGAHVGRILAIMVNLFNPQKILIGSPLSKAADILFPVISDSIRQQALPAYSQHISVESTQFSNQGTMAGAALVKDAMYNGSLLIRLLQG.

A DNA-binding region (H-T-H motif) is located at residues 33–42; the sequence is RIDLSRLAQL. The Zn(2+) site is built by His247, Cys257, Cys259, and Cys264.

It belongs to the ROK (NagC/XylR) family. In terms of assembly, homodimer. Homotetramer. There is probably an equilibrium between the dimeric and the tetrameric form. Interacts with dephosphorylated PtsG. Mlc and PtsG EIIB domain form a complex with the 1:1 stoichiometry. Interacts with MtfA.

The protein localises to the cytoplasm. Its activity is regulated as follows. Activity is modulated by glucose. In the presence of glucose, is inhibited by interaction with the dephosphorylated form of PtsG, which sequesters Mlc in the inner membrane and prevents Mlc binding to its target promoters. The restriction of conformational freedom resulting from the anchoring of four ends of Mlc to the membrane could be the primary cause of its loss of DNA-binding activity in vivo. Activity is also inhibited by interaction with the Mlc titration factor A (mtfA). The inactivation mechanisms of Mlc by dephosphorylated PtsG and MtfA differ significantly. In terms of biological role, global regulator of carbohydrate metabolism. Represses the expression of several genes involved in sugar transport and utilization, in particular phosphoenolpyruvate-carbohydrate phosphotransferase system (PTS) genes. Represses expression of ptsG (EIICB(Glc)), which encodes the PTS system glucose-specific EIICB component. Also represses the expression of the manXYZ operon, encoding the mannose-specific PTS system, expression of malT, encoding the transcriptional activator of the maltose regulon, and expression of the pts operon, composed of the genes ptsH, ptsI and crr. Represses its own expression. Acts by binding to the regulatory region of the target genes. The chain is DNA-binding transcriptional repressor Mlc from Escherichia coli (strain K12).